The following is a 204-amino-acid chain: Leucyl/phenylalanyl-tRNA--protein transferase (204 aa).

It belongs to the L/F-transferase family.

It localises to the cytoplasm. It catalyses the reaction N-terminal L-lysyl-[protein] + L-leucyl-tRNA(Leu) = N-terminal L-leucyl-L-lysyl-[protein] + tRNA(Leu) + H(+). It carries out the reaction N-terminal L-arginyl-[protein] + L-leucyl-tRNA(Leu) = N-terminal L-leucyl-L-arginyl-[protein] + tRNA(Leu) + H(+). The enzyme catalyses L-phenylalanyl-tRNA(Phe) + an N-terminal L-alpha-aminoacyl-[protein] = an N-terminal L-phenylalanyl-L-alpha-aminoacyl-[protein] + tRNA(Phe). Its function is as follows. Functions in the N-end rule pathway of protein degradation where it conjugates Leu, Phe and, less efficiently, Met from aminoacyl-tRNAs to the N-termini of proteins containing an N-terminal arginine or lysine. In Agrobacterium fabrum (strain C58 / ATCC 33970) (Agrobacterium tumefaciens (strain C58)), this protein is Leucyl/phenylalanyl-tRNA--protein transferase.